The following is a 245-amino-acid chain: Aliphatic sulfonates import ATP-binding protein SsuB 1 (245 aa).

The ABC transporter domain occupies 9–227 (LDLVGIGHRY…HRGDAQLAAW (219 aa)). Residue 41–48 (GPSGVGKS) coordinates ATP.

The protein belongs to the ABC transporter superfamily. Aliphatic sulfonates importer (TC 3.A.1.17.2) family. The complex is composed of two ATP-binding proteins (SsuB), two transmembrane proteins (SsuC) and a solute-binding protein (SsuA).

It localises to the cell membrane. The enzyme catalyses ATP + H2O + aliphatic sulfonate-[sulfonate-binding protein]Side 1 = ADP + phosphate + aliphatic sulfonateSide 2 + [sulfonate-binding protein]Side 1.. Its function is as follows. Part of the ABC transporter complex SsuABC involved in aliphatic sulfonates import. Responsible for energy coupling to the transport system. This chain is Aliphatic sulfonates import ATP-binding protein SsuB 1, found in Rhodococcus jostii (strain RHA1).